The primary structure comprises 384 residues: Spermatogenesis-associated protein 32 (384 aa).

The interval 23–60 (RDDLSQHQIQEEQELEADMLEQKPQLQVDLDLDPDPDP) is disordered. Phosphoserine occurs at positions 167 and 170. Disordered regions lie at residues 211-232 (DAHS…SSDL), 284-310 (VEER…LKSW), and 340-366 (LLQP…EKEN). The segment covering 214–231 (SAPPTTSSQAPSPLLSSD) has biased composition (low complexity). Over residues 353 to 366 (SKEDSVPPGKEKEN) the composition is skewed to basic and acidic residues.

In terms of assembly, interacts with syntaxin-1 and ACTB. Detected in testis, and on the acrosomal cap of spermatids.

This Homo sapiens (Human) protein is Spermatogenesis-associated protein 32 (SPATA32).